A 427-amino-acid polypeptide reads, in one-letter code: Isocitrate dehydrogenase [NADP] (427 aa).

Threonine 114 is a binding site for NADP(+). 5 residues coordinate D-threo-isocitrate: serine 123, asparagine 125, arginine 129, arginine 139, and arginine 163. A Mg(2+)-binding site is contributed by aspartate 317. NADP(+) is bound by residues 349–355 (HGTAPKY), asparagine 362, tyrosine 401, and arginine 405.

It belongs to the isocitrate and isopropylmalate dehydrogenases family. As to quaternary structure, homodimer. It depends on Mg(2+) as a cofactor. Mn(2+) serves as cofactor.

The enzyme catalyses D-threo-isocitrate + NADP(+) = 2-oxoglutarate + CO2 + NADPH. In terms of biological role, catalyzes the oxidative decarboxylation of isocitrate to 2-oxoglutarate and carbon dioxide with the concomitant reduction of NADP(+). In Coxiella burnetii (strain RSA 493 / Nine Mile phase I), this protein is Isocitrate dehydrogenase [NADP] (icd).